The following is a 303-amino-acid chain: tRNA pseudouridine synthase B (303 aa).

Asp38 serves as the catalytic Nucleophile.

The protein belongs to the pseudouridine synthase TruB family. Type 1 subfamily.

It carries out the reaction uridine(55) in tRNA = pseudouridine(55) in tRNA. Its function is as follows. Responsible for synthesis of pseudouridine from uracil-55 in the psi GC loop of transfer RNAs. The sequence is that of tRNA pseudouridine synthase B from Oceanobacillus iheyensis (strain DSM 14371 / CIP 107618 / JCM 11309 / KCTC 3954 / HTE831).